A 76-amino-acid polypeptide reads, in one-letter code: MDQLYMTVQDYLLKFRKISSLESLEKLFDHLNYTLTDDMDIVNMYRAADHRRAELVSGGRLFDVGQVPQSVWRYVQ.

The protein belongs to the Hha/YmoA/Cnu family.

Functionally, binds to H-NS and modifies the range of genes it silences; H-NS alone silences 'core' genes while the H-NS-Hha complex (and presumably also H-NS-YdgT) silences genes acquired by horizontal gene transfer. Plays a role silencing virulence factors in the absence of factors that induce pathogenicity. The protein is Transcription modulator YdgT (ydgT) of Salmonella typhimurium (strain SL1344).